Reading from the N-terminus, the 186-residue chain is UPF0301 protein Sfri_2850 (186 aa).

Belongs to the UPF0301 (AlgH) family.

The chain is UPF0301 protein Sfri_2850 from Shewanella frigidimarina (strain NCIMB 400).